The primary structure comprises 152 residues: 1,4-dihydroxy-2-naphthoyl-CoA hydrolase (152 aa).

D20 is a catalytic residue.

It belongs to the 4-hydroxybenzoyl-CoA thioesterase family. DHNA-CoA hydrolase subfamily.

The enzyme catalyses 1,4-dihydroxy-2-naphthoyl-CoA + H2O = 1,4-dihydroxy-2-naphthoate + CoA + H(+). It functions in the pathway cofactor biosynthesis; phylloquinone biosynthesis. It participates in quinol/quinone metabolism; 1,4-dihydroxy-2-naphthoate biosynthesis; 1,4-dihydroxy-2-naphthoate from chorismate: step 7/7. Functionally, catalyzes the hydrolysis of 1,4-dihydroxy-2-naphthoyl-CoA (DHNA-CoA) to 1,4-dihydroxy-2-naphthoate (DHNA), a reaction involved in phylloquinone (vitamin K1) biosynthesis. This is 1,4-dihydroxy-2-naphthoyl-CoA hydrolase from Synechococcus sp. (strain CC9311).